The following is a 613-amino-acid chain: Pentatricopeptide repeat-containing protein At2g02750 (613 aa).

15 PPR repeats span residues 30–64 (NKFTFPPLLKSCAKLGDVVQGRILHAQVVKTGFFV), 65–99 (DVFTATALVSMYMKVKQVTDALKVLDEMPERGIAS), 101–126 (NAAVSGLLENGFCRDAFRMFGDARVS), 128–162 (SGMNSVTVASVLGGCGDIEGGMQLHCLAMKSGFEM), 163–193 (EVYVGTSLVSMYSRCGEWVLAARMFEKVPHK), 194–228 (SVVTYNAFISGLMENGVMNLVPSVFNLMRKFSSEE), 230–264 (NDVTFVNAITACASLLNLQYGRQLHGLVMKKEFQF), 265–295 (ETMVGTALIDMYSKCRCWKSAYIVFTELKDT), 297–331 (NLISWNSVISGMMINGQHETAVELFEKLDSEGLKP), 332–366 (DSATWNSLISGFSQLGKVIEAFKFFERMLSVVMVP), 367–401 (SLKCLTSLLSACSDIWTLKNGKEIHGHVIKAAAER), 402–432 (DIFVLTSLIDMYMKCGLSSWARRIFDRFEPK), 435–469 (DPVFWNVMISGYGKHGECESAIEIFELLREEKVEP), 470–500 (SLATFTAVLSACSHCGNVEKGSQIFRLMQEE), and 506–539 (STEHIGCMIDLLGRSGRLREAKEVIDQMSEPSSS). The tract at residues 540-613 (VYSSLLGSCR…VKLPGLSLSG (74 aa)) is type E motif; degenerate.

The protein belongs to the PPR family. PCMP-E subfamily.

This Arabidopsis thaliana (Mouse-ear cress) protein is Pentatricopeptide repeat-containing protein At2g02750 (PCMP-E22).